The primary structure comprises 58 residues: uncharacterized protein (58 aa).

The next 2 helical transmembrane spans lie at 5–25 and 32–52; these read IAFE…IIAE and WIVV…FKMI.

It localises to the cell membrane. This is an uncharacterized protein from Methanocaldococcus jannaschii (strain ATCC 43067 / DSM 2661 / JAL-1 / JCM 10045 / NBRC 100440) (Methanococcus jannaschii).